A 150-amino-acid polypeptide reads, in one-letter code: Deoxyuridine 5'-triphosphate nucleotidohydrolase (150 aa).

Residues 70-72 (RSG), N83, and 87-89 (TID) each bind substrate.

This sequence belongs to the dUTPase family. It depends on Mg(2+) as a cofactor.

It carries out the reaction dUTP + H2O = dUMP + diphosphate + H(+). The protein operates within pyrimidine metabolism; dUMP biosynthesis; dUMP from dCTP (dUTP route): step 2/2. Functionally, this enzyme is involved in nucleotide metabolism: it produces dUMP, the immediate precursor of thymidine nucleotides and it decreases the intracellular concentration of dUTP so that uracil cannot be incorporated into DNA. The chain is Deoxyuridine 5'-triphosphate nucleotidohydrolase from Desulfotalea psychrophila (strain LSv54 / DSM 12343).